A 90-amino-acid polypeptide reads, in one-letter code: Cell division topological specificity factor (90 aa).

The protein belongs to the MinE family.

Functionally, prevents the cell division inhibition by proteins MinC and MinD at internal division sites while permitting inhibition at polar sites. This ensures cell division at the proper site by restricting the formation of a division septum at the midpoint of the long axis of the cell. The chain is Cell division topological specificity factor from Clostridium perfringens (strain ATCC 13124 / DSM 756 / JCM 1290 / NCIMB 6125 / NCTC 8237 / Type A).